Reading from the N-terminus, the 229-residue chain is Putative N-acetylmannosamine-6-phosphate 2-epimerase (229 aa).

This sequence belongs to the NanE family.

It carries out the reaction an N-acyl-D-glucosamine 6-phosphate = an N-acyl-D-mannosamine 6-phosphate. It functions in the pathway amino-sugar metabolism; N-acetylneuraminate degradation; D-fructose 6-phosphate from N-acetylneuraminate: step 3/5. Its function is as follows. Converts N-acetylmannosamine-6-phosphate (ManNAc-6-P) to N-acetylglucosamine-6-phosphate (GlcNAc-6-P). The protein is Putative N-acetylmannosamine-6-phosphate 2-epimerase of Salmonella agona (strain SL483).